We begin with the raw amino-acid sequence, 360 residues long: 3-isopropylmalate dehydrogenase (360 aa).

Positions 66 to 75 (RCHPARRRRR) are enriched in basic residues. A disordered region spans residues 66-101 (RCHPARRRRRSEMGRHRPGHPPGARPAENPFATGPV). Residues R133 and D223 each coordinate substrate. Residues D223, D247, and D251 each coordinate Mg(2+).

The protein belongs to the isocitrate and isopropylmalate dehydrogenases family. LeuB type 1 subfamily. As to quaternary structure, homodimer. Requires Mg(2+) as cofactor. The cofactor is Mn(2+).

It is found in the cytoplasm. The enzyme catalyses (2R,3S)-3-isopropylmalate + NAD(+) = 4-methyl-2-oxopentanoate + CO2 + NADH. Its pathway is amino-acid biosynthesis; L-leucine biosynthesis; L-leucine from 3-methyl-2-oxobutanoate: step 3/4. Its function is as follows. Catalyzes the oxidation of 3-carboxy-2-hydroxy-4-methylpentanoate (3-isopropylmalate) to 3-carboxy-4-methyl-2-oxopentanoate. The product decarboxylates to 4-methyl-2 oxopentanoate. The polypeptide is 3-isopropylmalate dehydrogenase (leuB) (Azotobacter vinelandii).